We begin with the raw amino-acid sequence, 489 residues long: Bifunctional protein HldE (489 aa).

Residues 1 to 328 form a ribokinase region; the sequence is METENIHSFD…ELKAQLQDQP (328 aa). 206–209 serves as a coordination point for ATP; sequence NKKE. Residue D276 is part of the active site. Residues 357–489 are cytidylyltransferase; the sequence is LTNGCFDLLH…IIQDIRNGRG (133 aa).

The protein in the N-terminal section; belongs to the carbohydrate kinase PfkB family. It in the C-terminal section; belongs to the cytidylyltransferase family. Homodimer.

The enzyme catalyses D-glycero-beta-D-manno-heptose 7-phosphate + ATP = D-glycero-beta-D-manno-heptose 1,7-bisphosphate + ADP + H(+). It catalyses the reaction D-glycero-beta-D-manno-heptose 1-phosphate + ATP + H(+) = ADP-D-glycero-beta-D-manno-heptose + diphosphate. It functions in the pathway nucleotide-sugar biosynthesis; ADP-L-glycero-beta-D-manno-heptose biosynthesis; ADP-L-glycero-beta-D-manno-heptose from D-glycero-beta-D-manno-heptose 7-phosphate: step 1/4. The protein operates within nucleotide-sugar biosynthesis; ADP-L-glycero-beta-D-manno-heptose biosynthesis; ADP-L-glycero-beta-D-manno-heptose from D-glycero-beta-D-manno-heptose 7-phosphate: step 3/4. Functionally, catalyzes the phosphorylation of D-glycero-D-manno-heptose 7-phosphate at the C-1 position to selectively form D-glycero-beta-D-manno-heptose-1,7-bisphosphate. In terms of biological role, catalyzes the ADP transfer from ATP to D-glycero-beta-D-manno-heptose 1-phosphate, yielding ADP-D-glycero-beta-D-manno-heptose. This Desulfatibacillum aliphaticivorans protein is Bifunctional protein HldE.